The primary structure comprises 321 residues: Ribosomal RNA small subunit methyltransferase H (321 aa).

S-adenosyl-L-methionine contacts are provided by residues 29–31 (GGH), Asp48, Tyr76, Asp97, and Gln104. The disordered stretch occupies residues 277–321 (LTRGAEPASETEKAENPRAASVRLRAVERTAPNPDHTRKPTGGAS).

It belongs to the methyltransferase superfamily. RsmH family.

It is found in the cytoplasm. The catalysed reaction is cytidine(1402) in 16S rRNA + S-adenosyl-L-methionine = N(4)-methylcytidine(1402) in 16S rRNA + S-adenosyl-L-homocysteine + H(+). Specifically methylates the N4 position of cytidine in position 1402 (C1402) of 16S rRNA. The protein is Ribosomal RNA small subunit methyltransferase H of Frankia casuarinae (strain DSM 45818 / CECT 9043 / HFP020203 / CcI3).